The chain runs to 569 residues: Proline--tRNA ligase (569 aa).

The protein belongs to the class-II aminoacyl-tRNA synthetase family. ProS type 1 subfamily. In terms of assembly, homodimer.

Its subcellular location is the cytoplasm. The catalysed reaction is tRNA(Pro) + L-proline + ATP = L-prolyl-tRNA(Pro) + AMP + diphosphate. Catalyzes the attachment of proline to tRNA(Pro) in a two-step reaction: proline is first activated by ATP to form Pro-AMP and then transferred to the acceptor end of tRNA(Pro). As ProRS can inadvertently accommodate and process non-cognate amino acids such as alanine and cysteine, to avoid such errors it has two additional distinct editing activities against alanine. One activity is designated as 'pretransfer' editing and involves the tRNA(Pro)-independent hydrolysis of activated Ala-AMP. The other activity is designated 'posttransfer' editing and involves deacylation of mischarged Ala-tRNA(Pro). The misacylated Cys-tRNA(Pro) is not edited by ProRS. This Latilactobacillus sakei subsp. sakei (strain 23K) (Lactobacillus sakei subsp. sakei) protein is Proline--tRNA ligase.